Here is a 434-residue protein sequence, read N- to C-terminus: MAEEADTNIEIWKIKKLIKGLESARGNGTSMISLIMPPRDQVSRVTKMLGDEYGTASNIKSRVNRQSVLSAITSAQQRLKLYNKVPTNGLVLYTGTIVNDDGKEKKVTFDFEPFRPINASLYLCDNKFHTEALNELLESDDKFGFIVMDGNGTLFGTLSGNTREVLHKFTVDLPKKHGRGGQSALRFARLRMEKRHNYVRKTAELATQFYINPATSQPNVSGLILAGSADFKTELSQSELFDPRLQAKILNVVDVSYGGENGFNQAIELSAEILSNVKFIQEKKLIGKYFEEISQDTGKYVFGVEDTLKALEMGAIETLIVWENLDINRYELKNSTTGEMVVKHFGKDQESDTSNFHDSETNAELEVQEKMPLLEWFANEYKRFGCTLEFVTNKSQEGSQFCRGFGGIGGMLRYQLDMRTFDELSDTEVYEDSD.

N-acetylalanine is present on Ala-2.

This sequence belongs to the eukaryotic release factor 1 family. As to quaternary structure, heterodimer of two subunits, one of which binds GTP.

It is found in the cytoplasm. In terms of biological role, directs the termination of nascent peptide synthesis (translation) in response to the termination codons UAA, UAG and UGA. Modulates plant growth and development. The protein is Eukaryotic peptide chain release factor subunit 1-2 of Arabidopsis thaliana (Mouse-ear cress).